We begin with the raw amino-acid sequence, 208 residues long: Thiamine-phosphate synthase (208 aa).

Residues 36–40 (QLRMK) and aspartate 68 each bind 4-amino-2-methyl-5-(diphosphooxymethyl)pyrimidine. Mg(2+) is bound by residues aspartate 69 and aspartate 88. Threonine 107 contributes to the 4-amino-2-methyl-5-(diphosphooxymethyl)pyrimidine binding site. Residue 133 to 135 (TTT) participates in 2-[(2R,5Z)-2-carboxy-4-methylthiazol-5(2H)-ylidene]ethyl phosphate binding. Residue lysine 136 participates in 4-amino-2-methyl-5-(diphosphooxymethyl)pyrimidine binding. Glycine 169 is a binding site for 2-[(2R,5Z)-2-carboxy-4-methylthiazol-5(2H)-ylidene]ethyl phosphate.

Belongs to the thiamine-phosphate synthase family. Mg(2+) is required as a cofactor.

The catalysed reaction is 2-[(2R,5Z)-2-carboxy-4-methylthiazol-5(2H)-ylidene]ethyl phosphate + 4-amino-2-methyl-5-(diphosphooxymethyl)pyrimidine + 2 H(+) = thiamine phosphate + CO2 + diphosphate. It catalyses the reaction 2-(2-carboxy-4-methylthiazol-5-yl)ethyl phosphate + 4-amino-2-methyl-5-(diphosphooxymethyl)pyrimidine + 2 H(+) = thiamine phosphate + CO2 + diphosphate. It carries out the reaction 4-methyl-5-(2-phosphooxyethyl)-thiazole + 4-amino-2-methyl-5-(diphosphooxymethyl)pyrimidine + H(+) = thiamine phosphate + diphosphate. The protein operates within cofactor biosynthesis; thiamine diphosphate biosynthesis; thiamine phosphate from 4-amino-2-methyl-5-diphosphomethylpyrimidine and 4-methyl-5-(2-phosphoethyl)-thiazole: step 1/1. Condenses 4-methyl-5-(beta-hydroxyethyl)thiazole monophosphate (THZ-P) and 2-methyl-4-amino-5-hydroxymethyl pyrimidine pyrophosphate (HMP-PP) to form thiamine monophosphate (TMP). This chain is Thiamine-phosphate synthase, found in Phocaeicola vulgatus (strain ATCC 8482 / DSM 1447 / JCM 5826 / CCUG 4940 / NBRC 14291 / NCTC 11154) (Bacteroides vulgatus).